We begin with the raw amino-acid sequence, 127 residues long: Major sperm protein 55/57 (127 aa).

Residue Ala2 is modified to N-acetylalanine. Positions 9 to 126 (DIQTQPGTKI…RRKNLPIEYN (118 aa)) constitute an MSP domain.

As to expression, sperm.

The protein localises to the cell projection. The protein resides in the pseudopodium. Its subcellular location is the cytoplasm. It localises to the cytoskeleton. Its function is as follows. Central component in molecular interactions underlying sperm crawling. Forms an extensive filament system that extends from sperm villipoda, along the leading edge of the pseudopod. In Caenorhabditis elegans, this protein is Major sperm protein 55/57 (msp-55).